The sequence spans 140 residues: Arsenate reductase ArsI2 (140 aa).

Residue C10 is the Nucleophile; cysteine thioarsenate intermediate of the active site.

Belongs to the ArsC family.

The enzyme catalyses [glutaredoxin]-dithiol + arsenate + glutathione + H(+) = glutathionyl-S-S-[glutaredoxin] + arsenite + H2O. In terms of biological role, catalyzes the reduction of arsenate [As(V)] to arsenite [As(III)]. Does not constitute the major arsenate reductase in cells: essential only in the absence of ArsC (AC P74313). This Synechocystis sp. (strain ATCC 27184 / PCC 6803 / Kazusa) protein is Arsenate reductase ArsI2.